The primary structure comprises 342 residues: Fructose-1,6-bisphosphatase class 1 (342 aa).

4 residues coordinate Mg(2+): glutamate 97, aspartate 119, leucine 121, and aspartate 122. Substrate contacts are provided by residues 122–125, asparagine 215, tyrosine 247, and lysine 280; that span reads DGSS. Glutamate 286 lines the Mg(2+) pocket.

Belongs to the FBPase class 1 family. In terms of assembly, homotetramer. It depends on Mg(2+) as a cofactor.

The protein resides in the cytoplasm. It carries out the reaction beta-D-fructose 1,6-bisphosphate + H2O = beta-D-fructose 6-phosphate + phosphate. The protein operates within carbohydrate biosynthesis; gluconeogenesis. The polypeptide is Fructose-1,6-bisphosphatase class 1 (Leptospira interrogans serogroup Icterohaemorrhagiae serovar copenhageni (strain Fiocruz L1-130)).